The following is a 116-amino-acid chain: Ribosome-binding factor A (116 aa).

This sequence belongs to the RbfA family. Monomer. Binds 30S ribosomal subunits, but not 50S ribosomal subunits or 70S ribosomes.

The protein localises to the cytoplasm. Its function is as follows. One of several proteins that assist in the late maturation steps of the functional core of the 30S ribosomal subunit. Associates with free 30S ribosomal subunits (but not with 30S subunits that are part of 70S ribosomes or polysomes). Required for efficient processing of 16S rRNA. May interact with the 5'-terminal helix region of 16S rRNA. The polypeptide is Ribosome-binding factor A (Halalkalibacterium halodurans (strain ATCC BAA-125 / DSM 18197 / FERM 7344 / JCM 9153 / C-125) (Bacillus halodurans)).